The following is a 1202-amino-acid chain: Protein jagged-2 (1202 aa).

Residues 1-1037 are Extracellular-facing; sequence GACCDGDGRT…ETVVMGGSST (1037 aa). The N-linked (GlcNAc...) asparagine glycan is linked to N107. The 45-residue stretch at 150-194 folds into the DSL domain; that stretch reads VRCDENYYSATCNKFCRPRNDFFGHYTCDQYGNKACMDGWMGKEC. Intrachain disulfides connect C152/C161, C165/C177, C185/C194, C199/C210, C203/C216, C218/C227, C230/C241, C236/C247, C249/C258, C265/C277, C271/C287, C289/C298, C305/C316, C310/C325, C327/C336, C343/C354, C348/C363, C365/C374, C381/C392, C386/C401, C403/C412, C419/C429, C423/C438, C440/C449, C456/C467, C461/C476, C478/C487, C495/C506, C500/C515, C517/C526, C544/C567, C561/C577, C579/C588, C595/C606, C600/C615, C617/C626, C633/C644, C638/C653, C655/C664, C671/C682, C676/C691, and C693/C702. The 34-residue stretch at 195–228 folds into the EGF-like 1 domain; that stretch reads KEAVCKQGCNLLHGGCTVPGECRCSYGWQGKFCD. In terms of domain architecture, EGF-like 2; atypical spans 229–259; that stretch reads ECVPYPGCVHGSCVEPWHCDCETNWGGLLCD. 2 EGF-like domains span residues 261–299 and 301–337; these read DLNYCGSHHPCVNGGTCINAEPDQYLCACPDGYLGKNCE and AEHACASNPCANGGSCHEVLSGFECHCPSGWSGPTCA. An EGF-like 5; calcium-binding domain is found at 339-375; that stretch reads DIDECASNPCAAGGTCVDQVDGFECICPEQWVGATCQ. The region spanning 377–413 is the EGF-like 6; calcium-binding domain; that stretch reads DANECEGKPCLNAFSCKNLIGGYYCDCLPGWKGANCH. In terms of domain architecture, EGF-like 7; calcium-binding spans 415–450; sequence NINDCHGQCQHGGTCKDLVNGYQCVCPRGFGGRHCE. EGF-like domains lie at 452-488 and 490-527; these read EYYKCASSPCRRGGICEDLVDGFRCHCPRGLSGPLCE and DVDLWCEPNPCLNGARCYNLEDDYYCACPEDFGGKNCS. The N-linked (GlcNAc...) asparagine glycan is linked to N525. An EGF-like 10; atypical domain is found at 529–589; the sequence is PRETCPGGAC…DSGFTGTYCH (61 aa). N574 is a glycosylation site (N-linked (GlcNAc...) asparagine). The EGF-like 11; calcium-binding domain maps to 591–627; it reads NIDDCMGQPCRNGGTCIDEVDSFACFCPSGWEGELCD. The EGF-like 12; calcium-binding domain occupies 629-665; the sequence is NPNDCLPDPCHSRGRCYDLVNDFYCVCDDGWKDKTCH. 2 consecutive EGF-like domains span residues 667–703 and 706–742; these read REFQCDAYTCSNGGTCYDSGDTFRCACPPGWKGSTCT and KNSSCVPNPCVNGGTCVGSGDSFSCICRDGWEGRTCT. N707 is a glycosylation site (N-linked (GlcNAc...) asparagine). Disulfide bonds link C710–C721, C715–C730, C732–C741, C748–C759, C753–C768, C770–C779, C786–C797, C791–C806, and C808–C817. The EGF-like 15; calcium-binding domain occupies 744–780; sequence NTNDCNPLPCYNGGICVDGVNWFRCECAPGFAGPDCR. An EGF-like 16; calcium-binding domain is found at 782-818; sequence NIDECQSSPCAYGATCVDEINGYRCSCPPGRSGPRCQ. N-linked (GlcNAc...) asparagine glycosylation occurs at N1015. The chain crosses the membrane as a helical span at residues 1038–1058; sequence GLLVPVLCSVFSVLWLACMVI. Over 1059 to 1202 the chain is Cytoplasmic; sequence CVWWTRKRRK…TKDVRCAGRE (144 aa). 3 stretches are compositionally biased toward basic and acidic residues: residues 1070–1080, 1147–1159, and 1185–1202; these read RERSRLPRDES, LSRGDGRLSRSRE, and VDNRAVRSTKDVRCAGRE. The interval 1070–1202 is disordered; sequence RERSRLPRDE…TKDVRCAGRE (133 aa). S1080 is modified (phosphoserine).

Its subcellular location is the membrane. Functionally, putative Notch ligand involved in the mediation of Notch signaling. May have a role in neurogenesis in the peripheral nervous system, limb development and in the adult brain. The polypeptide is Protein jagged-2 (Jag2) (Rattus norvegicus (Rat)).